The following is a 548-amino-acid chain: Hydroxylamine reductase (548 aa).

Positions 3, 6, 15, and 21 each coordinate [4Fe-4S] cluster. Hybrid [4Fe-2O-2S] cluster-binding residues include H240, E264, C308, C402, C430, C455, E490, and K492. C402 carries the cysteine persulfide modification.

This sequence belongs to the HCP family. Requires [4Fe-4S] cluster as cofactor. Hybrid [4Fe-2O-2S] cluster serves as cofactor.

The protein localises to the cytoplasm. It carries out the reaction A + NH4(+) + H2O = hydroxylamine + AH2 + H(+). Its function is as follows. Catalyzes the reduction of hydroxylamine to form NH(3) and H(2)O. The sequence is that of Hydroxylamine reductase from Parabacteroides distasonis (strain ATCC 8503 / DSM 20701 / CIP 104284 / JCM 5825 / NCTC 11152).